Here is a 341-residue protein sequence, read N- to C-terminus: Ketol-acid reductoisomerase (NADP(+)) (341 aa).

Residues 2–181 (AKVYYNGDVN…GAARAGVLET (180 aa)) enclose the KARI N-terminal Rossmann domain. NADP(+) is bound by residues 25-28 (YGSQ), Arg48, Ser52, and 82-85 (DEHQ). His107 is an active-site residue. Gly133 contributes to the NADP(+) binding site. The KARI C-terminal knotted domain occupies 182-327 (TFKEETETDL…RELREMMPFV (146 aa)). Mg(2+) contacts are provided by Asp190, Glu194, Glu226, and Glu230. Position 251 (Ser251) interacts with substrate.

This sequence belongs to the ketol-acid reductoisomerase family. It depends on Mg(2+) as a cofactor.

The catalysed reaction is (2R)-2,3-dihydroxy-3-methylbutanoate + NADP(+) = (2S)-2-acetolactate + NADPH + H(+). The enzyme catalyses (2R,3R)-2,3-dihydroxy-3-methylpentanoate + NADP(+) = (S)-2-ethyl-2-hydroxy-3-oxobutanoate + NADPH + H(+). It functions in the pathway amino-acid biosynthesis; L-isoleucine biosynthesis; L-isoleucine from 2-oxobutanoate: step 2/4. The protein operates within amino-acid biosynthesis; L-valine biosynthesis; L-valine from pyruvate: step 2/4. Functionally, involved in the biosynthesis of branched-chain amino acids (BCAA). Catalyzes an alkyl-migration followed by a ketol-acid reduction of (S)-2-acetolactate (S2AL) to yield (R)-2,3-dihydroxy-isovalerate. In the isomerase reaction, S2AL is rearranged via a Mg-dependent methyl migration to produce 3-hydroxy-3-methyl-2-ketobutyrate (HMKB). In the reductase reaction, this 2-ketoacid undergoes a metal-dependent reduction by NADPH to yield (R)-2,3-dihydroxy-isovalerate. In Shouchella clausii (strain KSM-K16) (Alkalihalobacillus clausii), this protein is Ketol-acid reductoisomerase (NADP(+)).